Consider the following 375-residue polypeptide: MAHSWVEIDLAALRHNYSRAKERLAPGSRILGVVKSDAYGHGMIPVARELVACGASFLAVSKHWEAVDLRAAGIRLPILCLLGVEPSEMAEAIRNEIRPVIYRIDHARRLSDTARSLNATATVHVKLDTGMGRLGIPCRHLEAFLNELLTLPAIRLEGVLSHFASADEADKTSSTLQLTRFREAMALLSARGLSVLGHIANSAGLLDLPQAHFDLARPGIMLYGSPPSLELHKPADLRPVMTFKSKIIQLKDVQAGQPIGYGGTFVTAAPGRIATIPVGYDDGYPRLLSNRGRVLVRGMSAPVVGRVSMNMITADVTHIPSAREDDEVVLLGAQGTERVTAEEIAQLCGTISYEIYCSIGRNRFKSFHNGIANSN.

Residue Lys-35 is the Proton acceptor; specific for D-alanine of the active site. Lys-35 bears the N6-(pyridoxal phosphate)lysine mark. Arg-133 contributes to the substrate binding site. Catalysis depends on Tyr-261, which acts as the Proton acceptor; specific for L-alanine. Substrate is bound at residue Met-309.

It belongs to the alanine racemase family. Pyridoxal 5'-phosphate is required as a cofactor.

It carries out the reaction L-alanine = D-alanine. It participates in amino-acid biosynthesis; D-alanine biosynthesis; D-alanine from L-alanine: step 1/1. Its function is as follows. Catalyzes the interconversion of L-alanine and D-alanine. May also act on other amino acids. The protein is Alanine racemase (alr) of Syntrophobacter fumaroxidans (strain DSM 10017 / MPOB).